The primary structure comprises 373 residues: Spermidine/putrescine import ATP-binding protein PotA (373 aa).

One can recognise an ABC transporter domain in the interval 6 to 236; sequence LSLSNLTKQF…PANLFTARFV (231 aa). Residue 38–45 coordinates ATP; that stretch reads GPSGCGKT.

Belongs to the ABC transporter superfamily. Spermidine/putrescine importer (TC 3.A.1.11.1) family. In terms of assembly, the complex is composed of two ATP-binding proteins (PotA), two transmembrane proteins (PotB and PotC) and a solute-binding protein (PotD).

It localises to the cell inner membrane. The catalysed reaction is ATP + H2O + polyamine-[polyamine-binding protein]Side 1 = ADP + phosphate + polyamineSide 2 + [polyamine-binding protein]Side 1.. Part of the ABC transporter complex PotABCD involved in spermidine/putrescine import. Responsible for energy coupling to the transport system. The chain is Spermidine/putrescine import ATP-binding protein PotA from Marinobacter nauticus (strain ATCC 700491 / DSM 11845 / VT8) (Marinobacter aquaeolei).